Consider the following 335-residue polypeptide: NmrA-like family domain-containing oxidoreductase lnbB (335 aa).

Residues 14-18, 41-45, 62-63, 83-85, lysine 142, and 166-169 each bind NADP(+); these read GTGNQ, RHPDS, DG, TNS, and YYEQ.

Belongs to the NmrA-type oxidoreductase family.

Its pathway is secondary metabolite biosynthesis. NmrA-like family domain-containing oxidoreductase; part of the lnb gene cluster that mediates the biosynthesis of diastereomeric piperazines. Lna and lnb clusters encode sets of enzymes that produce overlapping sets of previously undescribed metabolites such as piperazinomycin-like metabolites or morpholine. The lna and lnb biosynthetic pathways appear to be part of a signaling network that controls the formation of sclerotia, a resilient overwintering structure. One primary function of the non-canonical nonribosomal peptide synthetases lnaA and lnbA consists in the reduction of L-tyrosine. The presence in the clusters of tailoring enzymes such as the oxidoreductases lnaB, lnbB, lnaE or lnbE, as well as of the cytochrome P450 monooxygenases lnaC, lnaD, or lnbC, might explain formation of various diastereomeric piperazines. The chain is NmrA-like family domain-containing oxidoreductase lnbB from Aspergillus flavus (strain ATCC 200026 / FGSC A1120 / IAM 13836 / NRRL 3357 / JCM 12722 / SRRC 167).